The primary structure comprises 368 residues: UPF0284 protein Cyan7425_0342 (368 aa).

Belongs to the UPF0284 family.

The polypeptide is UPF0284 protein Cyan7425_0342 (Cyanothece sp. (strain PCC 7425 / ATCC 29141)).